The following is a 179-amino-acid chain: Isopentenyl-diphosphate Delta-isomerase (179 aa).

Residues histidine 24 and histidine 30 each contribute to the Mn(2+) site. One can recognise a Nudix hydrolase domain in the interval 28–160; it reads LLHRAFSIFI…PEKFTVWFLT (133 aa). Cysteine 65 is an active-site residue. Position 67 (histidine 67) interacts with Mn(2+). Residue glutamate 85 coordinates Mg(2+). Mn(2+)-binding residues include glutamate 110 and glutamate 112. The active site involves glutamate 112.

It belongs to the IPP isomerase type 1 family. As to quaternary structure, homodimer. Mg(2+) is required as a cofactor. The cofactor is Mn(2+).

Its subcellular location is the cytoplasm. It carries out the reaction isopentenyl diphosphate = dimethylallyl diphosphate. It functions in the pathway isoprenoid biosynthesis; dimethylallyl diphosphate biosynthesis; dimethylallyl diphosphate from isopentenyl diphosphate: step 1/1. Catalyzes the 1,3-allylic rearrangement of the homoallylic substrate isopentenyl (IPP) to its highly electrophilic allylic isomer, dimethylallyl diphosphate (DMAPP). The sequence is that of Isopentenyl-diphosphate Delta-isomerase from Serratia proteamaculans (strain 568).